Consider the following 430-residue polypeptide: Serine hydroxymethyltransferase (430 aa).

(6S)-5,6,7,8-tetrahydrofolate is bound at residue 120 to 122 (GHI). Lys226 is subject to N6-(pyridoxal phosphate)lysine.

The protein belongs to the SHMT family. Homodimer. Pyridoxal 5'-phosphate is required as a cofactor.

The protein localises to the cytoplasm. It participates in amino-acid biosynthesis; glycine biosynthesis; glycine from L-serine: step 1/1. Functionally, catalyzes the reversible interconversion of serine and glycine with a modified folate serving as the one-carbon carrier. Also exhibits a pteridine-independent aldolase activity toward beta-hydroxyamino acids, producing glycine and aldehydes, via a retro-aldol mechanism. The sequence is that of Serine hydroxymethyltransferase from Pyrobaculum islandicum (strain DSM 4184 / JCM 9189 / GEO3).